Reading from the N-terminus, the 1364-residue chain is Serine protease EatA (1364 aa).

A signal peptide spans 1-56 (MNKVFSLKYSFLAKGFIAVSELARRVSVKGKLKSASSIIISPITIAIVSYAPPSLA). Residues 57 to 307 (ATVNADISYQ…VVTTQDFLHQ (251 aa)) enclose the Peptidase S6 domain. Residues histidine 134, aspartate 162, and serine 267 each act as charge relay system in the active site. The region spanning 1098–1364 (DSQGDAGGWA…SINANFRYYF (267 aa)) is the Autotransporter domain.

Post-translationally, cleaved to release the mature protein from the outer membrane.

The protein resides in the periplasm. It is found in the secreted. The protein localises to the cell surface. Its subcellular location is the cell outer membrane. With respect to regulation, inhibited by phenylmethylsulfonyl fluoride. Autotransporter serine protease probably involved in virulence. This Escherichia coli O78:H11 (strain H10407 / ETEC) protein is Serine protease EatA (eatA).